The primary structure comprises 440 residues: Protein root UVB sensitive 3 (440 aa).

3 consecutive transmembrane segments (helical) span residues 109–129 (IGATFQWFLRDFTGMLGGILF), 154–174 (IGMLMDLLSPLFPSAFIVVVC), and 232–252 (FTSGNPMAIWLSFLSLTVFHM).

This sequence belongs to the RUS1 family.

It is found in the membrane. The chain is Protein root UVB sensitive 3 from Arabidopsis thaliana (Mouse-ear cress).